Reading from the N-terminus, the 126-residue chain is Histone H2B type 1-N (126 aa).

Over residues 1–12 (MPEPSKSAPAPK) the composition is skewed to low complexity. Positions 1–36 (MPEPSKSAPAPKKGSKKAVTKAQKKDGKKRKRSRKE) are disordered. Pro2 is modified (N-acetylproline). Glu3 bears the ADP-ribosyl glutamic acid mark. Lys6 is modified (N6-(2-hydroxyisobutyryl)lysine; alternate). At Lys6 the chain carries N6-(beta-hydroxybutyryl)lysine; alternate. At Lys6 the chain carries N6-acetyllysine; alternate. Lys6 is subject to N6-butyryllysine; alternate. An N6-crotonyllysine; alternate modification is found at Lys6. An N6-lactoyllysine; alternate modification is found at Lys6. Lys6 participates in a covalent cross-link: Glycyl lysine isopeptide (Lys-Gly) (interchain with G-Cter in SUMO2); alternate. Ser7 carries the post-translational modification ADP-ribosylserine. Lys12 bears the N6-(beta-hydroxybutyryl)lysine; alternate mark. Residues Lys12 and Lys13 each carry the N6-acetyllysine; alternate modification. An N6-crotonyllysine; alternate mark is found at Lys12 and Lys13. The residue at position 12 (Lys12) is an N6-lactoyllysine; alternate. Lys13 bears the N6-(2-hydroxyisobutyryl)lysine; alternate mark. Ser15 carries the phosphoserine; by STK4/MST1 modification. Residues Lys16, Lys17, Lys21, and Lys24 each carry the N6-acetyllysine; alternate modification. 4 positions are modified to N6-crotonyllysine; alternate: Lys16, Lys17, Lys21, and Lys24. N6-lactoyllysine; alternate occurs at positions 16, 17, 21, and 24. An N6-glutaryllysine; alternate modification is found at Lys17. N6-(2-hydroxyisobutyryl)lysine; alternate occurs at positions 21 and 24. Position 21 is an N6-(beta-hydroxybutyryl)lysine; alternate (Lys21). The residue at position 21 (Lys21) is an N6-butyryllysine; alternate. Lys21 is covalently cross-linked (Glycyl lysine isopeptide (Lys-Gly) (interchain with G-Cter in SUMO2); alternate). Position 25 is an N6-(2-hydroxyisobutyryl)lysine (Lys25). The residue at position 35 (Lys35) is an N6-(2-hydroxyisobutyryl)lysine; alternate. N6-(beta-hydroxybutyryl)lysine; alternate is present on Lys35. N6-crotonyllysine; alternate is present on Lys35. At Lys35 the chain carries N6-glutaryllysine; alternate. Lys35 carries the post-translational modification N6-succinyllysine; alternate. Lys35 is covalently cross-linked (Glycyl lysine isopeptide (Lys-Gly) (interchain with G-Cter in ubiquitin); alternate). Glu36 is subject to PolyADP-ribosyl glutamic acid. Position 37 is a phosphoserine; by AMPK (Ser37). 3 positions are modified to N6-(2-hydroxyisobutyryl)lysine; alternate: Lys44, Lys47, and Lys58. Lys44 is modified (N6-lactoyllysine; alternate). N6-glutaryllysine; alternate is present on residues Lys44 and Lys47. Lys47 bears the N6-methyllysine; alternate mark. N6,N6-dimethyllysine; alternate is present on Lys58. Arg80 bears the Dimethylated arginine mark. N6-(2-hydroxyisobutyryl)lysine; alternate is present on Lys86. Lys86 is subject to N6-acetyllysine; alternate. Lys86 carries the N6-lactoyllysine; alternate modification. Lys86 carries the post-translational modification N6,N6,N6-trimethyllysine; alternate. An omega-N-methylarginine mark is found at Arg87 and Arg93. Lys109 is modified (N6-(2-hydroxyisobutyryl)lysine; alternate). Position 109 is an N6-lactoyllysine; alternate (Lys109). Lys109 bears the N6-glutaryllysine; alternate mark. At Lys109 the chain carries N6-methyllysine; alternate. Ser113 is a glycosylation site (O-linked (GlcNAc) serine). Phosphothreonine is present on Thr116. Lys117 and Lys121 each carry N6-(2-hydroxyisobutyryl)lysine; alternate. At Lys117 the chain carries N6-(beta-hydroxybutyryl)lysine; alternate. An N6-lactoyllysine; alternate mark is found at Lys117 and Lys121. N6-glutaryllysine; alternate is present on residues Lys117 and Lys121. An N6-succinyllysine; alternate mark is found at Lys117 and Lys121. Lys117 carries the N6-methylated lysine; alternate modification. Lys121 is covalently cross-linked (Glycyl lysine isopeptide (Lys-Gly) (interchain with G-Cter in ubiquitin); alternate).

Belongs to the histone H2B family. The nucleosome is a histone octamer containing two molecules each of H2A, H2B, H3 and H4 assembled in one H3-H4 heterotetramer and two H2A-H2B heterodimers. The octamer wraps approximately 147 bp of DNA. Post-translationally, monoubiquitination at Lys-35 (H2BK34Ub) by the MSL1/MSL2 dimer is required for histone H3 'Lys-4' (H3K4me) and 'Lys-79' (H3K79me) methylation and transcription activation at specific gene loci, such as HOXA9 and MEIS1 loci. Similarly, monoubiquitination at Lys-121 (H2BK120Ub) by the RNF20/40 complex gives a specific tag for epigenetic transcriptional activation and is also prerequisite for histone H3 'Lys-4' and 'Lys-79' methylation. It also functions cooperatively with the FACT dimer to stimulate elongation by RNA polymerase II. H2BK120Ub also acts as a regulator of mRNA splicing: deubiquitination by USP49 is required for efficient cotranscriptional splicing of a large set of exons. Phosphorylated on Ser-15 (H2BS14ph) by STK4/MST1 during apoptosis; which facilitates apoptotic chromatin condensation. Also phosphorylated on Ser-15 in response to DNA double strand breaks (DSBs), and in correlation with somatic hypermutation and immunoglobulin class-switch recombination. Phosphorylation at Ser-37 (H2BS36ph) by AMPK in response to stress promotes transcription. In terms of processing, glcNAcylation at Ser-113 promotes monoubiquitination of Lys-121. It fluctuates in response to extracellular glucose, and associates with transcribed genes. Post-translationally, ADP-ribosylated by PARP1 or PARP2 on Ser-7 (H2BS6ADPr) in response to DNA damage. H2BS6ADPr promotes recruitment of CHD1L. Mono-ADP-ribosylated on Glu-3 (H2BE2ADPr) by PARP3 in response to single-strand breaks. Poly ADP-ribosylation on Glu-36 (H2BE35ADPr) by PARP1 regulates adipogenesis: it inhibits phosphorylation at Ser-37 (H2BS36ph), thereby blocking expression of pro-adipogenetic genes. Crotonylation (Kcr) is specifically present in male germ cells and marks testis-specific genes in post-meiotic cells, including X-linked genes that escape sex chromosome inactivation in haploid cells. Crotonylation marks active promoters and enhancers and confers resistance to transcriptional repressors. It is also associated with post-meiotically activated genes on autosomes. In terms of processing, lactylated in macrophages by EP300/P300 by using lactoyl-CoA directly derived from endogenous or exogenous lactate, leading to stimulates gene transcription.

The protein resides in the nucleus. It localises to the chromosome. Functionally, core component of nucleosome. Nucleosomes wrap and compact DNA into chromatin, limiting DNA accessibility to the cellular machineries which require DNA as a template. Histones thereby play a central role in transcription regulation, DNA repair, DNA replication and chromosomal stability. DNA accessibility is regulated via a complex set of post-translational modifications of histones, also called histone code, and nucleosome remodeling. This chain is Histone H2B type 1-N (H2BC15), found in Bos taurus (Bovine).